Consider the following 739-residue polypeptide: Cleavage and polyadenylation specificity factor subunit 2 (739 aa).

Residues 411 to 423 (VKEEETKASHGSD) show a composition bias toward basic and acidic residues. Residues 411–430 (VKEEETKASHGSDDNSSEPM) are disordered.

The protein belongs to the metallo-beta-lactamase superfamily. RNA-metabolizing metallo-beta-lactamase-like family. CPSF2/YSH1 subfamily. Component of the CPSF complex, at least composed of CPSF160, CPSF100, CPSF73-I, CPSF73-II, CPSF30, FY and FIPS5. Forms a complex with cleavage and polyadenylation specificity factor (CPSF) subunits FY, PAPS2, CSTF50, CPSF30, CPSF73-I, CPSF73-II and CPSF160.

It is found in the nucleus. The protein resides in the cytoplasm. Its function is as follows. CPSF plays a key role in pre-mRNA 3'-end formation, recognizing the AAUAAA signal sequence and interacting with poly(A)polymerase and other factors to bring about cleavage and poly(A) addition. Required for antisense-RNA-mediated gene silencing. This chain is Cleavage and polyadenylation specificity factor subunit 2 (CPSF100), found in Arabidopsis thaliana (Mouse-ear cress).